A 232-amino-acid chain; its full sequence is 5'-methylthioadenosine/S-adenosylhomocysteine nucleosidase (232 aa).

Glutamate 12 serves as the catalytic Proton acceptor. Substrate contacts are provided by residues glycine 78, valine 152, and 173 to 174 (ME). The active-site Proton donor is the aspartate 197.

This sequence belongs to the PNP/UDP phosphorylase family. MtnN subfamily. Homodimer.

The catalysed reaction is S-adenosyl-L-homocysteine + H2O = S-(5-deoxy-D-ribos-5-yl)-L-homocysteine + adenine. It catalyses the reaction S-methyl-5'-thioadenosine + H2O = 5-(methylsulfanyl)-D-ribose + adenine. It carries out the reaction 5'-deoxyadenosine + H2O = 5-deoxy-D-ribose + adenine. It functions in the pathway amino-acid biosynthesis; L-methionine biosynthesis via salvage pathway; S-methyl-5-thio-alpha-D-ribose 1-phosphate from S-methyl-5'-thioadenosine (hydrolase route): step 1/2. Catalyzes the irreversible cleavage of the glycosidic bond in both 5'-methylthioadenosine (MTA) and S-adenosylhomocysteine (SAH/AdoHcy) to adenine and the corresponding thioribose, 5'-methylthioribose and S-ribosylhomocysteine, respectively. Also cleaves 5'-deoxyadenosine, a toxic by-product of radical S-adenosylmethionine (SAM) enzymes, into 5-deoxyribose and adenine. Thus, is required for in vivo function of the radical SAM enzymes biotin synthase and lipoic acid synthase, that are inhibited by 5'-deoxyadenosine accumulation. The sequence is that of 5'-methylthioadenosine/S-adenosylhomocysteine nucleosidase from Buchnera aphidicola subsp. Acyrthosiphon pisum (strain 5A).